We begin with the raw amino-acid sequence, 329 residues long: Protoheme IX farnesyltransferase (329 aa).

Helical transmembrane passes span 61–81 (LACT…LNCL), 108–128 (AFLI…AGVN), 130–150 (LAAG…TIVL), 158–178 (IVIG…AATG), 186–206 (WLFG…ALLL), 243–263 (LLGV…VLPF), and 284–304 (AKGL…LLLL).

Belongs to the UbiA prenyltransferase family. Protoheme IX farnesyltransferase subfamily.

The protein localises to the cell inner membrane. The catalysed reaction is heme b + (2E,6E)-farnesyl diphosphate + H2O = Fe(II)-heme o + diphosphate. The protein operates within porphyrin-containing compound metabolism; heme O biosynthesis; heme O from protoheme: step 1/1. In terms of biological role, converts heme B (protoheme IX) to heme O by substitution of the vinyl group on carbon 2 of heme B porphyrin ring with a hydroxyethyl farnesyl side group. This is Protoheme IX farnesyltransferase from Synechococcus sp. (strain RCC307).